The chain runs to 485 residues: Inosine-5'-monophosphate dehydrogenase (485 aa).

2 consecutive CBS domains span residues 97–154 (IIRD…VSDV) and 155–211 (MVRD…PDAS). Residues Asp-246 and 295-297 (GIG) contribute to the NAD(+) site. K(+)-binding residues include Gly-297 and Gly-299. Residue Ser-300 participates in IMP binding. Cys-302 contacts K(+). Catalysis depends on Cys-302, which acts as the Thioimidate intermediate. Residues 335-337 (DGG), 358-359 (GS), and 382-386 (YRGMG) each bind IMP. The Proton acceptor role is filled by Arg-398. An IMP-binding site is contributed by Glu-409. K(+) is bound by residues Glu-463, Ser-464, and His-465.

It belongs to the IMPDH/GMPR family. Homotetramer. The cofactor is K(+).

It carries out the reaction IMP + NAD(+) + H2O = XMP + NADH + H(+). Its pathway is purine metabolism; XMP biosynthesis via de novo pathway; XMP from IMP: step 1/1. Mycophenolic acid (MPA) is a non-competitive inhibitor that prevents formation of the closed enzyme conformation by binding to the same site as the amobile flap. In contrast, mizoribine monophosphate (MZP) is a competitive inhibitor that induces the closed conformation. MPA is a potent inhibitor of mammalian IMPDHs but a poor inhibitor of the bacterial enzymes. MZP is a more potent inhibitor of bacterial IMPDH. Functionally, catalyzes the conversion of inosine 5'-phosphate (IMP) to xanthosine 5'-phosphate (XMP), the first committed and rate-limiting step in the de novo synthesis of guanine nucleotides, and therefore plays an important role in the regulation of cell growth. The polypeptide is Inosine-5'-monophosphate dehydrogenase (Thermoplasma acidophilum (strain ATCC 25905 / DSM 1728 / JCM 9062 / NBRC 15155 / AMRC-C165)).